Reading from the N-terminus, the 395-residue chain is MSAEMTDLNFAEGRPLLVDKDGITVLLQEYVTQEHDIETAHGIVHVTMCGTPKLNRPVILTYHDIGLNHKTCFNSLFNFEDMHEITQHFSVCHVDAPGQQEGAASFPAGYMYPSMDQLAEMLPGVIQQLGLKSVLGLGIGAGAYILTRFALNHPSMVEGLVLININPCAEGWMDWAATKISGWTHALPDMVISHLFSKDEVHSNHELVETYRQHIVQDINQNNLQLFVKSYNSRRDLEIERPFPGSNTVTLKCPALLVVGDSSPAVDAVVDCNSKLDPTKTTLLKMSDCGGFPQVVQPAKLAEAFKYFVQGMGYMPAASMTRLMRSRTGSAASSSSQDGNRSRSHTNEGSRSRSHTGDGNRSRAHTGDGNRSRSHTDSNNTNSEHNTPKSMEISC.

The interval arginine 325–cysteine 395 is disordered. The segment covering serine 326–glycine 339 has biased composition (low complexity). 4 tandem repeats follow at residues glycine 339–glutamate 348, glycine 349–aspartate 358, glycine 359–aspartate 368, and glycine 369–serine 378. The interval glycine 339–serine 378 is 4 X 10 AA tandem repeats of G-[NS]-R-S-R-[AS]-H-T-[DGN]-[DES]. The span at histidine 345–threonine 376 shows a compositional bias: basic and acidic residues. Polar residues predominate over residues aspartate 377 to lysine 389.

The protein belongs to the NDRG family.

Functionally, may be involved in pronephros development, after specification of the pronephros. This chain is Protein NDRG1, found in Xenopus tropicalis (Western clawed frog).